Consider the following 658-residue polypeptide: Probable mitochondrial Rho GTPase gemA (658 aa).

Residues 1 to 633 (MKNNIKVILI…NGSNGSNNSN (633 aa)) are Cytoplasmic-facing. The Miro 1 domain maps to 2–175 (KNNIKVILIG…LYASQTSVFF (174 aa)). GTP-binding positions include 11–18 (GDEQVGKS), 57–62 (DTFDDG), and 118–121 (NKLD). EF-hand domains follow at residues 191 to 226 (GCER…CGHE) and 311 to 346 (MGNE…TPKI). Ca(2+) contacts are provided by D204, D206, D208, S210, E215, D324, D326, D328, and D335. Residues 420 to 616 (RNIVNCYVFG…YHEMMETIVN (197 aa)) enclose the Miro 2 domain. GTP contacts are provided by residues 429-436 (GAEAVGKT), 466-468 (LLK), and 530-533 (TKNN). A disordered region spans residues 532 to 575 (NNNNNNNNNNNNNNNNNNNNLNNNNNNINNNNNNNNNNTTTTNA). The chain crosses the membrane as a helical; Anchor for type IV membrane protein span at residues 634-656 (ILTYLVIAAGVAGVGLLLSKYLA). Topologically, residues 657–658 (KK) are mitochondrial intermembrane.

It belongs to the mitochondrial Rho GTPase family.

The protein resides in the mitochondrion outer membrane. Its function is as follows. Mitochondrial GTPase involved in mitochondrial trafficking. Probably involved in control of anterograde transport of mitochondria and their subcellular distribution. The polypeptide is Probable mitochondrial Rho GTPase gemA (gemA) (Dictyostelium discoideum (Social amoeba)).